Here is a 639-residue protein sequence, read N- to C-terminus: 1-deoxy-D-xylulose-5-phosphate synthase (639 aa).

Thiamine diphosphate contacts are provided by residues histidine 76 and 117-119 (AHS). Aspartate 148 serves as a coordination point for Mg(2+). Thiamine diphosphate is bound by residues 149–150 (GS), asparagine 181, tyrosine 288, and glutamate 370. Position 181 (asparagine 181) interacts with Mg(2+).

This sequence belongs to the transketolase family. DXPS subfamily. In terms of assembly, homodimer. Mg(2+) is required as a cofactor. Thiamine diphosphate serves as cofactor.

The catalysed reaction is D-glyceraldehyde 3-phosphate + pyruvate + H(+) = 1-deoxy-D-xylulose 5-phosphate + CO2. It participates in metabolic intermediate biosynthesis; 1-deoxy-D-xylulose 5-phosphate biosynthesis; 1-deoxy-D-xylulose 5-phosphate from D-glyceraldehyde 3-phosphate and pyruvate: step 1/1. Functionally, catalyzes the acyloin condensation reaction between C atoms 2 and 3 of pyruvate and glyceraldehyde 3-phosphate to yield 1-deoxy-D-xylulose-5-phosphate (DXP). This Leptothrix cholodnii (strain ATCC 51168 / LMG 8142 / SP-6) (Leptothrix discophora (strain SP-6)) protein is 1-deoxy-D-xylulose-5-phosphate synthase.